Consider the following 25-residue polypeptide: Panurgine K (25 aa).

2 cysteine pairs are disulfide-bonded: Cys-8/Cys-23 and Cys-11/Cys-19.

It localises to the target cell membrane. The protein resides in the secreted. In terms of biological role, antimicrobial peptide active against Gram-positive bacteria M.luteus (MIC=1.6 uM) and B.subtilis (MIC=3.3 uM). Less active against Gram-negative bacteria E.coli (MIC=63.3 uM) and yeast C.albicans (MIC=24.2 uM). Not active against S.aureus and P.aeruginosa. Has no hemolytic activity against human erythrocytes. Probably acts by disrupting membranes of target cells. This is Panurgine K from Panurgus calcaratus (Solitary bee).